The chain runs to 1413 residues: Zinc finger SWIM domain-containing protein 8 (1413 aa).

Phosphoserine occurs at positions 36, 48, and 53. Residues 45–65 (RKQSAGPNSPTGGGGGGGSGG) are disordered. Residues 55–65 (TGGGGGGGSGG) are compositionally biased toward gly residues. An SWIM-type zinc finger spans residues 172-208 (YNVAVMFDRCRVTSCSCTCGAGAKWCTHVVALCLFRI). Residues 600 to 817 (ESQTHKPQTL…ESHAPHVPNQ (218 aa)) are disordered. Residues 604-625 (HKPQTLSSFYSSSRPATASQRS) show a composition bias toward polar residues. A compositionally biased stretch (gly residues) spans 704 to 715 (SRGGYNGRGWGS). Phosphothreonine is present on T724. The span at 729 to 744 (IDSSAPETTSDSSPTL) shows a compositional bias: polar residues. Phosphoserine occurs at positions 738, 741, and 745. The span at 759 to 794 (GRGQDSDSISSSSSDSLGSSSSSGSRRASASGGARA) shows a compositional bias: low complexity. Basic and acidic residues predominate over residues 795–811 (KTVEVGRYKGRRPESHA). S852 and S1412 each carry phosphoserine.

This sequence belongs to the ZSWIM8 family. In terms of assembly, component of the SCF-like E3 ubiquitin-protein ligase complex which contains CUL3, RBX1, ELOB, ELOC and ZSWIM8. Interacts with DAB1.

Its subcellular location is the cytoplasm. The protein localises to the cytosol. It functions in the pathway protein modification; protein ubiquitination. Functionally, substrate recognition component of a SCF-like E3 ubiquitin-protein ligase complex that promotes target-directed microRNA degradation (TDMD), a process that mediates degradation of microRNAs (miRNAs). The SCF-like E3 ubiquitin-protein ligase complex acts by catalyzing ubiquitination and subsequent degradation of AGO proteins (AGO1, AGO2, AGO3 and/or AGO4), thereby exposing miRNAs for degradation. Specifically recognizes and binds AGO proteins when they are engaged with a TDMD target. May also acts as a regulator of axon guidance: specifically recognizes misfolded ROBO3 and promotes its ubiquitination and subsequent degradation. Plays an essential role for proper embryonic development of heart and lung. Controls protein quality of DAB1, a key signal molecule for brain development, thus protecting its signaling strength. Mechanistically, recognizes intrinsically disordered regions of DAB1 and eliminates misfolded DAB1 that cannot be properly phosphorylated. This chain is Zinc finger SWIM domain-containing protein 8, found in Bos taurus (Bovine).